The following is a 312-amino-acid chain: F-box protein At1g11270 (312 aa).

Residues 29–80 enclose the F-box domain; sequence SVVKLLLPHDVVGLILERLPVESLLRFKCVSNQWKSTIESQCFQERQLIRRM.

The protein is F-box protein At1g11270 of Arabidopsis thaliana (Mouse-ear cress).